Consider the following 232-residue polypeptide: Phosphatidylserine decarboxylase proenzyme (232 aa).

Catalysis depends on Ser190, which acts as the Schiff-base intermediate with substrate; via pyruvic acid. Ser190 bears the Pyruvic acid (Ser); by autocatalysis mark.

It belongs to the phosphatidylserine decarboxylase family. PSD-A subfamily. Heterodimer of a large membrane-associated beta subunit and a small pyruvoyl-containing alpha subunit. Pyruvate is required as a cofactor. In terms of processing, is synthesized initially as an inactive proenzyme. Formation of the active enzyme involves a self-maturation process in which the active site pyruvoyl group is generated from an internal serine residue via an autocatalytic post-translational modification. Two non-identical subunits are generated from the proenzyme in this reaction, and the pyruvate is formed at the N-terminus of the alpha chain, which is derived from the carboxyl end of the proenzyme. The post-translation cleavage follows an unusual pathway, termed non-hydrolytic serinolysis, in which the side chain hydroxyl group of the serine supplies its oxygen atom to form the C-terminus of the beta chain, while the remainder of the serine residue undergoes an oxidative deamination to produce ammonia and the pyruvoyl prosthetic group on the alpha chain.

It localises to the cell membrane. The catalysed reaction is a 1,2-diacyl-sn-glycero-3-phospho-L-serine + H(+) = a 1,2-diacyl-sn-glycero-3-phosphoethanolamine + CO2. It participates in phospholipid metabolism; phosphatidylethanolamine biosynthesis; phosphatidylethanolamine from CDP-diacylglycerol: step 2/2. Catalyzes the formation of phosphatidylethanolamine (PtdEtn) from phosphatidylserine (PtdSer). This is Phosphatidylserine decarboxylase proenzyme from Allorhizobium ampelinum (strain ATCC BAA-846 / DSM 112012 / S4) (Agrobacterium vitis (strain S4)).